Here is a 428-residue protein sequence, read N- to C-terminus: Enolase 3 (428 aa).

Gln-163 is a binding site for (2R)-2-phosphoglycerate. Glu-205 (proton donor) is an active-site residue. Mg(2+)-binding residues include Asp-242, Glu-286, and Asp-313. (2R)-2-phosphoglycerate-binding residues include Lys-338, Arg-367, Ser-368, and Lys-389. The active-site Proton acceptor is the Lys-338.

This sequence belongs to the enolase family. Mg(2+) is required as a cofactor.

It localises to the cytoplasm. Its subcellular location is the secreted. The protein resides in the cell surface. The catalysed reaction is (2R)-2-phosphoglycerate = phosphoenolpyruvate + H2O. It functions in the pathway carbohydrate degradation; glycolysis; pyruvate from D-glyceraldehyde 3-phosphate: step 4/5. Its function is as follows. Catalyzes the reversible conversion of 2-phosphoglycerate (2-PG) into phosphoenolpyruvate (PEP). It is essential for the degradation of carbohydrates via glycolysis. The polypeptide is Enolase 3 (Lactobacillus johnsonii (strain CNCM I-12250 / La1 / NCC 533)).